The chain runs to 446 residues: NADH-ubiquinone oxidoreductase chain 4 (446 aa).

13 helical membrane passes run Ile-4–Val-24, Met-56–Ser-76, Ile-93–Tyr-113, Leu-114–Pro-134, Val-141–Val-161, Leu-182–Leu-202, Pro-212–Leu-232, Tyr-245–Leu-265, Ala-272–Met-292, Leu-297–Leu-317, Met-330–Leu-350, Ile-373–Ala-393, and Leu-426–Leu-446.

The protein belongs to the complex I subunit 4 family.

It is found in the mitochondrion membrane. It carries out the reaction a ubiquinone + NADH + 5 H(+)(in) = a ubiquinol + NAD(+) + 4 H(+)(out). Functionally, core subunit of the mitochondrial membrane respiratory chain NADH dehydrogenase (Complex I) that is believed to belong to the minimal assembly required for catalysis. Complex I functions in the transfer of electrons from NADH to the respiratory chain. The immediate electron acceptor for the enzyme is believed to be ubiquinone. The sequence is that of NADH-ubiquinone oxidoreductase chain 4 (mt:ND4) from Drosophila yakuba (Fruit fly).